Consider the following 924-residue polypeptide: Mediator of RNA polymerase II transcription subunit 16 (924 aa).

This sequence belongs to the Mediator complex subunit 16 family. In terms of assembly, component of the Mediator complex.

The protein resides in the nucleus. In terms of biological role, component of the Mediator complex, a coactivator involved in the regulated transcription of nearly all RNA polymerase II-dependent genes. Mediator functions as a bridge to convey information from gene-specific regulatory proteins to the basal RNA polymerase II transcription machinery. Mediator is recruited to promoters by direct interactions with regulatory proteins and serves as a scaffold for the assembly of a functional preinitiation complex with RNA polymerase II and the general transcription factors. In Yarrowia lipolytica (strain CLIB 122 / E 150) (Yeast), this protein is Mediator of RNA polymerase II transcription subunit 16 (SIN4).